A 396-amino-acid chain; its full sequence is Acetyl-CoA acetyltransferase (396 aa).

C88 serves as the catalytic Acyl-thioester intermediate. Active-site proton acceptor residues include H352 and C382.

Belongs to the thiolase-like superfamily. Thiolase family. As to quaternary structure, homotetramer.

It carries out the reaction 2 acetyl-CoA = acetoacetyl-CoA + CoA. Its pathway is biopolymer metabolism; poly-(R)-3-hydroxybutanoate biosynthesis. Its function is as follows. When expressed in E.coli with Synechocystis PhaB, PhaC and PhaE confers the ability to synthesize up to 12% (w/w) poly(3-hydroxybutyrate) (PHB) depending on the carbon source. The chain is Acetyl-CoA acetyltransferase from Synechocystis sp. (strain ATCC 27184 / PCC 6803 / Kazusa).